The sequence spans 393 residues: Phosphoglycerate kinase (393 aa).

Substrate contacts are provided by residues 21 to 23 (DLN), Arg-36, 59 to 62 (HLGR), Arg-113, and Arg-146. Residues Lys-197, Glu-319, and 345–348 (GGDT) contribute to the ATP site.

The protein belongs to the phosphoglycerate kinase family. As to quaternary structure, monomer.

Its subcellular location is the cytoplasm. The enzyme catalyses (2R)-3-phosphoglycerate + ATP = (2R)-3-phospho-glyceroyl phosphate + ADP. It participates in carbohydrate degradation; glycolysis; pyruvate from D-glyceraldehyde 3-phosphate: step 2/5. The sequence is that of Phosphoglycerate kinase from Nitratidesulfovibrio vulgaris (strain DP4) (Desulfovibrio vulgaris).